Here is a 206-residue protein sequence, read N- to C-terminus: Protein tyrosine phosphatase receptor type C-associated protein (206 aa).

A helical membrane pass occupies residues Val-34–Trp-54. Residues Gly-98–Ala-173 form a disordered region. A phosphoserine mark is found at Ser-99 and Ser-153. Positions Leu-161–Ala-173 are enriched in low complexity.

Interacts with CD45/PTPRC. Phosphorylated on tyrosine residues.

It localises to the membrane. This chain is Protein tyrosine phosphatase receptor type C-associated protein (PTPRCAP), found in Homo sapiens (Human).